Consider the following 430-residue polypeptide: Enolase (430 aa).

Residue Gln167 participates in (2R)-2-phosphoglycerate binding. The Proton donor role is filled by Glu209. Mg(2+) contacts are provided by Asp246, Glu287, and Asp314. (2R)-2-phosphoglycerate is bound by residues Lys339, Arg368, Ser369, and Lys390. The active-site Proton acceptor is Lys339.

Belongs to the enolase family. The cofactor is Mg(2+).

Its subcellular location is the cytoplasm. It localises to the secreted. It is found in the cell surface. It catalyses the reaction (2R)-2-phosphoglycerate = phosphoenolpyruvate + H2O. It functions in the pathway carbohydrate degradation; glycolysis; pyruvate from D-glyceraldehyde 3-phosphate: step 4/5. In terms of biological role, catalyzes the reversible conversion of 2-phosphoglycerate (2-PG) into phosphoenolpyruvate (PEP). It is essential for the degradation of carbohydrates via glycolysis. The polypeptide is Enolase (Prochlorococcus marinus (strain MIT 9215)).